The chain runs to 167 residues: Secreted LysM effector Blys6 (167 aa).

The signal sequence occupies residues 1–16 (MKGLCVAACTLVLAAA). Residues 109 to 162 (KWYRIRRGDDCGPVASEFGISADQLIEWNPWLSADVDGTHYPCMNIWPTDNLCV) form the LysM domain.

It belongs to the secreted LysM effector family.

Its function is as follows. Might have a role in sequestration of chitin oligosaccharides (breakdown products of fungal cell walls that are released during invasion and act as triggers of host immunity) to dampen host defense. The sequence is that of Secreted LysM effector Blys6 from Beauveria bassiana (strain ARSEF 2860) (White muscardine disease fungus).